Consider the following 263-residue polypeptide: MAPK-interacting and spindle-stabilizing protein (263 aa).

A disordered region spans residues 13 to 238 (GSPAPFLPSG…LGKQQGHNTT (226 aa)). 2 stretches are compositionally biased toward pro residues: residues 14 to 34 (SPAPFLPSGPSCPQPSGPYPG) and 140 to 155 (GLQPSPNNPYPLPPGP). Residues 156–165 (SAASPGPGSL) are compositionally biased toward low complexity. The span at 176–189 (PSDSSNPESTLEST) shows a compositional bias: polar residues. A compositionally biased stretch (basic residues) spans 202 to 213 (IKRRRSKKKSKR).

This sequence belongs to the MISS family. As to quaternary structure, interacts with MAPK1. Post-translationally, phosphorylated in vitro by MAPK1.

It is found in the cytoplasm. The protein localises to the cytoskeleton. It localises to the spindle. In terms of biological role, involved in the maintenance of the spindle integrity during the cytostatic factor (CSF) arrest of oocytes. The polypeptide is MAPK-interacting and spindle-stabilizing protein (Mapk1ip1) (Mus musculus (Mouse)).